The sequence spans 222 residues: Formimidoylglutamase (222 aa).

Residues His-34, Asp-59, His-61, Asp-63, Asp-150, and Asp-152 each contribute to the Mn(2+) site.

It belongs to the arginase family. It depends on Mn(2+) as a cofactor.

It carries out the reaction N-formimidoyl-L-glutamate + H2O = formamide + L-glutamate. It functions in the pathway amino-acid degradation; L-histidine degradation into L-glutamate; L-glutamate from N-formimidoyl-L-glutamate (hydrolase route): step 1/1. Its function is as follows. Catalyzes the conversion of N-formimidoyl-L-glutamate to L-glutamate and formamide. The chain is Formimidoylglutamase (hutG) from Klebsiella aerogenes (Enterobacter aerogenes).